The primary structure comprises 257 residues: 1-(5-phosphoribosyl)-5-[(5-phosphoribosylamino)methylideneamino] imidazole-4-carboxamide isomerase (257 aa).

The active-site Proton acceptor is D8. The active-site Proton donor is D130.

The protein belongs to the HisA/HisF family.

The protein localises to the cytoplasm. It carries out the reaction 1-(5-phospho-beta-D-ribosyl)-5-[(5-phospho-beta-D-ribosylamino)methylideneamino]imidazole-4-carboxamide = 5-[(5-phospho-1-deoxy-D-ribulos-1-ylimino)methylamino]-1-(5-phospho-beta-D-ribosyl)imidazole-4-carboxamide. It functions in the pathway amino-acid biosynthesis; L-histidine biosynthesis; L-histidine from 5-phospho-alpha-D-ribose 1-diphosphate: step 4/9. This is 1-(5-phosphoribosyl)-5-[(5-phosphoribosylamino)methylideneamino] imidazole-4-carboxamide isomerase from Chlorobium chlorochromatii (strain CaD3).